A 389-amino-acid chain; its full sequence is Lipid-A-disaccharide synthase (389 aa).

Belongs to the LpxB family.

It catalyses the reaction a lipid X + a UDP-2-N,3-O-bis[(3R)-3-hydroxyacyl]-alpha-D-glucosamine = a lipid A disaccharide + UDP + H(+). The protein operates within bacterial outer membrane biogenesis; LPS lipid A biosynthesis. Condensation of UDP-2,3-diacylglucosamine and 2,3-diacylglucosamine-1-phosphate to form lipid A disaccharide, a precursor of lipid A, a phosphorylated glycolipid that anchors the lipopolysaccharide to the outer membrane of the cell. This is Lipid-A-disaccharide synthase from Histophilus somni (strain 2336) (Haemophilus somnus).